Consider the following 404-residue polypeptide: MSFNFCLPNLSFRSSCSSRPCVPSSCCGTTLPGACNIPASVGSCNWFCEGSFNGNEKETMQFLNDRLASYLEKVRQLERENAELERRILERSQQQEPLVCPNYQSYFRTIEELQQKILCGKSENARLVVQIDNAKLASDDFRTKYETEVSLRQLVEADLNGLRRILDELTLCKSDLEARVESLKEELICLKQNHEQEVNTLRSQLGDRLNVEVDAAPTVDLNHVLNETRAQYEALVETNRRDVEEWYIRQTEELNKQVVSSSEQLQSCQAEIIELRRTVNALEVELQAQHNLRDSLENTLTETEARYSCQLNQVQSLIVSVESQLAEIRSDLERQNQEYQVLLDVRARLECEINTYRGLLDSEDCKLPCNPCATTNTCGKPIGPCISNPCVSRTRCGPCNTFVH.

Positions 1–56 (MSFNFCLPNLSFRSSCSSRPCVPSSCCGTTLPGACNIPASVGSCNWFCEGSFNGNE) are head. The IF rod domain occupies 56 to 367 (EKETMQFLND…GLLDSEDCKL (312 aa)). The coil 1A stretch occupies residues 57–91 (KETMQFLNDRLASYLEKVRQLERENAELERRILER). Positions 92-102 (SQQQEPLVCPN) are linker 1. Residues 103-203 (YQSYFRTIEE…HEQEVNTLRS (101 aa)) are coil 1B. The segment at 204-219 (QLGDRLNVEVDAAPTV) is linker 12. A coil 2 region spans residues 220-363 (DLNHVLNETR…NTYRGLLDSE (144 aa)). A tail region spans residues 364–404 (DCKLPCNPCATTNTCGKPIGPCISNPCVSRTRCGPCNTFVH).

Belongs to the intermediate filament family.

Functionally, wool microfibrillar keratin. The chain is Keratin, type I microfibrillar, 47.6 kDa from Ovis aries (Sheep).